Reading from the N-terminus, the 424-residue chain is MWDHLKVTDSEVHDLLIGELKRQEYGLELIASENFASVAVMEAMGSILTNKYAEGYPAKRYYGGCEWVDKIEDLARERAKQLFKVKYANVQPHSGSQANMAAYLSIAEPGDVLMGMSLSHGGHLTHGASVNFSGKLFKVIQYGVNPETEMINYDEVRSMALQYKPKIIVAGGSAYSRIIDFKKFREIADEAGAYLVVDMAHFAGLVAAGLYPNPAEYAHIVTSTTHKTLRGPRGGLILTNDAEIYKAVNKTVFPGTQGGPLMHVIAAKAVCFKEAMSSGFVEYQKQVIANAKTLANELSSMGLRIVSGGTDTHLMLVDLTPLNVTGKAAEKALEKCGVTVNKNTIPNETRSPFVASGIRIGTPAVTTRGMREKEMKKIAELIFEVLKNVLDEEGNIPPHIQANVQMAVKKLCEEFPLYVDKIII.

Residues Leu-118 and 122 to 124 (GHL) each bind (6S)-5,6,7,8-tetrahydrofolate. An N6-(pyridoxal phosphate)lysine modification is found at Lys-227. 351–353 (SPF) lines the (6S)-5,6,7,8-tetrahydrofolate pocket.

Belongs to the SHMT family. As to quaternary structure, homodimer. The cofactor is pyridoxal 5'-phosphate.

Its subcellular location is the cytoplasm. It catalyses the reaction (6R)-5,10-methylene-5,6,7,8-tetrahydrofolate + glycine + H2O = (6S)-5,6,7,8-tetrahydrofolate + L-serine. Its pathway is one-carbon metabolism; tetrahydrofolate interconversion. It participates in amino-acid biosynthesis; glycine biosynthesis; glycine from L-serine: step 1/1. Functionally, catalyzes the reversible interconversion of serine and glycine with tetrahydrofolate (THF) serving as the one-carbon carrier. This reaction serves as the major source of one-carbon groups required for the biosynthesis of purines, thymidylate, methionine, and other important biomolecules. Also exhibits THF-independent aldolase activity toward beta-hydroxyamino acids, producing glycine and aldehydes, via a retro-aldol mechanism. The polypeptide is Serine hydroxymethyltransferase (Pseudothermotoga lettingae (strain ATCC BAA-301 / DSM 14385 / NBRC 107922 / TMO) (Thermotoga lettingae)).